Here is a 736-residue protein sequence, read N- to C-terminus: Transcription regulator protein BACH1 (736 aa).

Positions 34-100 (CDVTIFVEGQ…AYTAKLILSK (67 aa)) constitute a BTB domain. The residue at position 196 (serine 196) is a Phosphoserine. Positions 286–295 (MEPEETKKDP) are enriched in basic and acidic residues. 2 disordered regions span residues 286 to 312 (MEPEETKKDPASQCPTEKSEVTPFPHN) and 349 to 389 (KPLS…RSSV). 2 positions are modified to phosphoserine: serine 364 and serine 445. The bZIP domain maps to 557–620 (CIHDIRRRSK…GETKQNLTGL (64 aa)). The interval 562 to 578 (RRRSKNRIAAQRCRKRK) is basic motif. Residues 582–589 (IQNLESEI) are leucine-zipper. The segment at 680–719 (LPPCARGNSEPGYARGQESQQMSTATSEQAGPAEQCRQSG) is disordered. The span at 696–708 (QESQQMSTATSEQ) shows a compositional bias: polar residues.

This sequence belongs to the bZIP family. CNC subfamily. In terms of assembly, heterodimer of BACH1 and MAFK. Post-translationally, ubiquitinated by the SCF(FBXL17) complex or by the by the SCF(FBXO22) complex, leading to its degradation by the proteasome. Under oxidative stress, reactive oxygen species covalently modify cysteine residues on the bZIP domain of BACH1 and release it from chromatin. If the BTB domain of BACH1 remains intact, its beta1-alpha6 degron is recognized by FBXO22, promoting its ubiquitination and degradation. If the structural integrity of the beta1-alpha6 degron is compromised, FBXL17 will transiently associate with the BACH1 BTB dimer and remodel it into stably bound monomer for ubiquitination and degradation.

It is found in the nucleus. Functionally, transcriptional regulator that acts as a repressor or activator, depending on the context. Binds to NF-E2 DNA binding sites. Plays important roles in coordinating transcription activation and repression by MAFK. Together with MAF, represses the transcription of genes under the control of the NFE2L2 oxidative stress pathway. The protein is Transcription regulator protein BACH1 of Homo sapiens (Human).